Reading from the N-terminus, the 183-residue chain is Translation initiation factor IF-3 (183 aa).

It belongs to the IF-3 family. Monomer.

It localises to the cytoplasm. IF-3 binds to the 30S ribosomal subunit and shifts the equilibrium between 70S ribosomes and their 50S and 30S subunits in favor of the free subunits, thus enhancing the availability of 30S subunits on which protein synthesis initiation begins. The protein is Translation initiation factor IF-3 of Yersinia pseudotuberculosis serotype O:1b (strain IP 31758).